The following is a 519-amino-acid chain: Cytochrome P450 52E1 (519 aa).

Transmembrane regions (helical) follow at residues Ala-10–Ile-30 and Val-44–Leu-64. Residue Cys-479 participates in heme binding.

Belongs to the cytochrome P450 family. Heme serves as cofactor.

Its subcellular location is the membrane. Its function is as follows. Together with an NADPH cytochrome P450 the enzyme system catalyzes the terminal hydroxylation as the first step in the assimilation of alkanes and fatty acids. The polypeptide is Cytochrome P450 52E1 (CYP52E1) (Candida apicola (Yeast)).